A 316-amino-acid chain; its full sequence is tRNA dimethylallyltransferase (316 aa).

Residue 12-19 (GPTASGKT) participates in ATP binding. Residue 14-19 (TASGKT) coordinates substrate. Interaction with substrate tRNA regions lie at residues 37 to 40 (DSAL) and 161 to 165 (QRILR).

This sequence belongs to the IPP transferase family. In terms of assembly, monomer. Mg(2+) is required as a cofactor.

It catalyses the reaction adenosine(37) in tRNA + dimethylallyl diphosphate = N(6)-dimethylallyladenosine(37) in tRNA + diphosphate. Catalyzes the transfer of a dimethylallyl group onto the adenine at position 37 in tRNAs that read codons beginning with uridine, leading to the formation of N6-(dimethylallyl)adenosine (i(6)A). The sequence is that of tRNA dimethylallyltransferase from Idiomarina loihiensis (strain ATCC BAA-735 / DSM 15497 / L2-TR).